Consider the following 563-residue polypeptide: MESLVRQSKKLCPYIGRTSASSLKQLGNGRLTQKAGQCPIMGKAMGVRGFKSDAGSNAESATVDVHAAVDTSKGTCPHAAQYSPVYPSSRLDNYPFGMTQRGLGKVPTQDAHNATTFNYESFYENKINAKHQDKSYRYFNNINRLAAEFPRAHRGSIEEDKVTVWCANDYLGMGRNPVVVDAMHETLDKYGAGAGGTRNIAGHNRHAVELEAAIADLHKKEAALVFSSCYVANDSTLSLLGQALPNCVYFSDASNHASMIHGIRHGGSEKVVWKHNDLADLEAKLARYPKSTPKVIAFESVYSMCGSIGPIEEICDLADKYGAITFLDEVHAVGMYGPTGAGVAEHLDFEHYHSGAQTQRQPIMDRVDIFTGTLGKAYGCVGGYIAGSAKFVDMVRSYAPGFIFTTTLPPATMAGARAAINYQKATMKDRVAQQTHTRYVKDKLANRGIPVVPNPSHIVPVLVGDAQKAKAASDLLLTKHQIYVQAINFPTVPIGQERLRVTPTPGHHEGLCDELVAALEDVWQELDLKRVEDWTAEGGLCGVGEGVEVEPLWSEEQLSYGRD.

The N-terminal 18 residues, 1 to 18 (MESLVRQSKKLCPYIGRT), are a transit peptide targeting the mitochondrion. Substrate contacts are provided by arginine 137, serine 251, and lysine 270. Pyridoxal 5'-phosphate contacts are provided by serine 303, histidine 331, and threonine 373. Residue lysine 376 is part of the active site. Lysine 376 carries the N6-(pyridoxal phosphate)lysine modification. Positions 405 and 406 each coordinate pyridoxal 5'-phosphate. Threonine 491 lines the substrate pocket.

It belongs to the class-II pyridoxal-phosphate-dependent aminotransferase family. As to quaternary structure, homodimer. Pyridoxal 5'-phosphate is required as a cofactor.

It localises to the mitochondrion matrix. It carries out the reaction succinyl-CoA + glycine + H(+) = 5-aminolevulinate + CO2 + CoA. Its pathway is porphyrin-containing compound metabolism; protoporphyrin-IX biosynthesis; 5-aminolevulinate from glycine: step 1/1. In terms of biological role, catalyzes the synthesis of 5-aminolevulinate (ALA) from succinyl-CoA and glycine, the first and rate-limiting step in heme biosynthesis. This is 5-aminolevulinate synthase, mitochondrial (HEM1) from Yarrowia lipolytica (strain CLIB 122 / E 150) (Yeast).